The primary structure comprises 365 residues: Anthranilate phosphoribosyltransferase (365 aa).

5-phospho-alpha-D-ribose 1-diphosphate is bound by residues glycine 96, 99 to 100, threonine 104, 106 to 109, 124 to 132, and serine 136; these read GD, NIST, and KHGNRSVSS. Glycine 96 provides a ligand contact to anthranilate. Serine 108 lines the Mg(2+) pocket. Asparagine 127 provides a ligand contact to anthranilate. Arginine 182 contributes to the anthranilate binding site. The Mg(2+) site is built by aspartate 240 and glutamate 241.

It belongs to the anthranilate phosphoribosyltransferase family. Homodimer. Mg(2+) is required as a cofactor.

The enzyme catalyses N-(5-phospho-beta-D-ribosyl)anthranilate + diphosphate = 5-phospho-alpha-D-ribose 1-diphosphate + anthranilate. Its pathway is amino-acid biosynthesis; L-tryptophan biosynthesis; L-tryptophan from chorismate: step 2/5. In terms of biological role, catalyzes the transfer of the phosphoribosyl group of 5-phosphorylribose-1-pyrophosphate (PRPP) to anthranilate to yield N-(5'-phosphoribosyl)-anthranilate (PRA). The polypeptide is Anthranilate phosphoribosyltransferase (Colwellia psychrerythraea (strain 34H / ATCC BAA-681) (Vibrio psychroerythus)).